A 210-amino-acid polypeptide reads, in one-letter code: Probable GTP-binding protein EngB (210 aa).

The 175-residue stretch at 25–199 (TGIEVAFAGR…RQKLDSWFNE (175 aa)) folds into the EngB-type G domain. GTP is bound by residues 33–40 (GRSNAGKS), 60–64 (GRTQL), 78–81 (DLPG), 145–148 (TKAD), and 178–180 (FSS). The Mg(2+) site is built by S40 and T62.

Belongs to the TRAFAC class TrmE-Era-EngA-EngB-Septin-like GTPase superfamily. EngB GTPase family. Mg(2+) is required as a cofactor.

Necessary for normal cell division and for the maintenance of normal septation. The protein is Probable GTP-binding protein EngB of Klebsiella pneumoniae subsp. pneumoniae (strain ATCC 700721 / MGH 78578).